We begin with the raw amino-acid sequence, 472 residues long: Argininosuccinate lyase (472 aa).

Belongs to the lyase 1 family. Argininosuccinate lyase subfamily.

It is found in the cytoplasm. The catalysed reaction is 2-(N(omega)-L-arginino)succinate = fumarate + L-arginine. It participates in amino-acid biosynthesis; L-arginine biosynthesis; L-arginine from L-ornithine and carbamoyl phosphate: step 3/3. The sequence is that of Argininosuccinate lyase from Polynucleobacter asymbioticus (strain DSM 18221 / CIP 109841 / QLW-P1DMWA-1) (Polynucleobacter necessarius subsp. asymbioticus).